The chain runs to 881 residues: Cell wall protein PRY3 (881 aa).

Residues 1 to 18 form the signal peptide; the sequence is MLEFPISVLLGCLVAVKA. Positions 30 to 144 constitute an SCP domain; sequence LNEHNKFRAL…TWNNYIVCSY (115 aa). A glycan (N-linked (GlcNAc...) asparagine) is linked at Asn101. The segment at 262–313 is disordered; sequence VVSSDATSSTTTTSSVATSSSTTSSDPTSSTAAASSSDPASSSAAASSSAST. Asn360 is a glycosylation site (N-linked (GlcNAc...) asparagine). 2 disordered regions span residues 381 to 400 and 453 to 494; these read AADDIQGSTSKEATSSVSEH and VSST…NSAA. Residues 386–400 are compositionally biased toward polar residues; that stretch reads QGSTSKEATSSVSEH. N-linked (GlcNAc...) asparagine glycosylation is found at Asn488, Asn535, Asn547, and Asn569. The segment at 579–611 is disordered; it reads IDPTLDPTDNSASPTDNAKHTSTYGSSSTGASL. Residues 585 to 594 are compositionally biased toward polar residues; the sequence is PTDNSASPTD. Residues 599–611 show a composition bias toward low complexity; it reads TSTYGSSSTGASL. An N-linked (GlcNAc...) asparagine glycan is attached at Asn625. Disordered stretches follow at residues 758–788 and 800–830; these read LASDFATSEKPNEPTSVKSTSNEGTSSTTTT and PSSTSLGARTTTGSNGRSTTSQQDGSAMHQP. 2 stretches are compositionally biased toward low complexity: residues 776–788 and 808–820; these read STSNEGTSSTTTT and RTTTGSNGRSTTS. Polar residues predominate over residues 821-830; sequence QQDGSAMHQP. Gly853 carries GPI-anchor amidated glycine lipidation. A propeptide spans 854-881 (removed in mature form); that stretch reads AATPLSIFQCNSLAGTIAAFVVAVLFAF.

It belongs to the CRISP family. The GPI-anchor is attached to the protein in the endoplasmic reticulum and serves to target the protein to the cell surface. There, the glucosamine-inositol phospholipid moiety is cleaved off and the GPI-modified mannoprotein is covalently attached via its lipidless GPI glycan remnant to the 1,6-beta-glucan of the outer cell wall layer.

It is found in the secreted. Its subcellular location is the cell wall. The protein resides in the membrane. Its function is as follows. The full-length isoform (isoform Long) is a daughter cell-specific cell wall protein required for efficient export of lipids such as acetylated sterols. Acts in detoxification of hydrophobic compounds. Involved in tolerance to organic solvents such as dimethyl sulfoxide (DMSO). Also plays a role as an inhibitor of mating. STE12 is utilized as a repressor of full-length PRY3 transcription, ensuring efficient mating. There is no evidence that production of the short PRY3 transcript (isoform Short) is anything more than an adventitious by-product of the mechanism responsible for the repression of the full-length transcript. Moreover, no disadvantage is detectable for cells unable to make the short transcript. This chain is Cell wall protein PRY3 (PRY3), found in Saccharomyces cerevisiae (strain ATCC 204508 / S288c) (Baker's yeast).